The following is a 602-amino-acid chain: Pentatricopeptide repeat-containing protein At3g04760, chloroplastic (602 aa).

Residues 1-78 (MTPLSSELVG…TDATLPTERR (78 aa)) constitute a chloroplast transit peptide. Polar residues predominate over residues 42-64 (FSNSNPNNDNGRSFSSSGARNLQ). The interval 42-85 (FSNSNPNNDNGRSFSSSGARNLQTTTTTDATLPTERRQQHSQSL) is disordered. A compositionally biased stretch (low complexity) spans 65–74 (TTTTTDATLP). PPR repeat units lie at residues 88-122 (RDTQ…GYNP), 123-153 (DVIL…LEKF), 157-191 (DVFA…DFSP), 192-226 (DTVT…NCQP), 227-261 (TVIT…GLKP), 262-296 (DMFT…GCEP), 297-331 (DVIS…KCDP), 332-366 (NVVT…GLTP), 367-401 (DAYS…GCLP), 402-436 (DIVN…GCSP), 437-471 (NSSS…GIDP), 472-506 (DEIT…EFHP), 507-541 (SVVT…GCRP), and 542-576 (NETT…DAIS).

The protein belongs to the PPR family. P subfamily.

The protein resides in the plastid. The protein localises to the chloroplast. This is Pentatricopeptide repeat-containing protein At3g04760, chloroplastic from Arabidopsis thaliana (Mouse-ear cress).